Reading from the N-terminus, the 761-residue chain is RNA-binding protein mde7 (761 aa).

3 stretches are compositionally biased toward polar residues: residues 31–46, 58–83, and 99–110; these read PNHSSLSEQQSTNSLL, SRNSTTNPLNLLYTQTQQPARSTTPF, and SRNNSYLQGTAE. Disordered stretches follow at residues 31 to 110 and 188 to 213; these read PNHS…GTAE and HYFDDTDKSVHSKSSSGSNSLSEASN. Residues 188–197 are compositionally biased toward basic and acidic residues; it reads HYFDDTDKSV. Low complexity predominate over residues 199-211; that stretch reads SKSSSGSNSLSEA. One can recognise an RRM 1 domain in the interval 223-289; the sequence is IVGGLPDDFD…SSTNNFTIIQ (67 aa). The segment covering 442-466 has biased composition (polar residues); the sequence is ESNSLSNQPNNFAQTSFDYQPNHPN. Residues 442–468 are disordered; sequence ESNSLSNQPNNFAQTSFDYQPNHPNAI. One can recognise an RRM 2 domain in the interval 602–679; that stretch reads NTIYVGNLSN…GGIRLSYSKN (78 aa).

In Schizosaccharomyces pombe (strain 972 / ATCC 24843) (Fission yeast), this protein is RNA-binding protein mde7 (mde7).